The following is a 340-amino-acid chain: Cathepsin B (340 aa).

A signal peptide spans 1–17; the sequence is MSWSRSILCLLGAFANA. Residues 18–79 constitute a propeptide, activation peptide; sequence RSIPYYPPLS…ERVDFAEDMD (62 aa). Residue Asn-38 is glycosylated (N-linked (GlcNAc...) asparagine). Disulfide bonds link Cys-93–Cys-122, Cys-105–Cys-150, Cys-141–Cys-208, Cys-142–Cys-146, Cys-179–Cys-212, and Cys-187–Cys-198. Cys-108 is a catalytic residue. A glycan (N-linked (GlcNAc...) asparagine) is linked at Asn-192. Catalysis depends on residues His-279 and Asn-299.

This sequence belongs to the peptidase C1 family. As to quaternary structure, dimer of a heavy chain and a light chain cross-linked by a disulfide bond.

Its subcellular location is the lysosome. The catalysed reaction is Hydrolysis of proteins with broad specificity for peptide bonds. Preferentially cleaves -Arg-Arg-|-Xaa bonds in small molecule substrates (thus differing from cathepsin L). In addition to being an endopeptidase, shows peptidyl-dipeptidase activity, liberating C-terminal dipeptides.. Its function is as follows. Thiol protease which is believed to participate in intracellular degradation and turnover of proteins. Has also been implicated in tumor invasion and metastasis. This chain is Cathepsin B (CTSB), found in Gallus gallus (Chicken).